Here is a 389-residue protein sequence, read N- to C-terminus: MPHTDYLFTSESVTEGHPDKMADQISDAVLDAVLAQDKKGRVACETLLKTGYVMIAGEITTTARIEYPKLAREVVKRIGYVSGDMGFDGNTCGVLVAVDQQSPDIGQGVDVGGAGDQGMMFGYACDETNELMPAPIQYAHAVTRQLAKARRGGLDFLRPDGKSQVTVEYRGGKVARIDTVVVSTQHSESVSNRKLHAALREEVIAKALPKKLVDRKTKVFINPTGRFVIGGPMGDTGVTGRKIIVDTYGGMGRHGGGAFSGKDPSKVDRSAAYMGRYIAKNVVAAGLARRCEVQVAYAIGVAEPVSVMVETFGTAAVPEERIAQAVREVFGLTPKQIIEGLDLLRPVYEKTAAYGHFGRTEKEFSWERTDKKDALRDAAGGKVRAVAGA.

H17 is an ATP binding site. D19 serves as a coordination point for Mg(2+). E45 lines the K(+) pocket. L-methionine-binding residues include E58 and Q101. The interval 101–111 (QSPDIGQGVDV) is flexible loop. Residues 160–162 (DGK), 226–227 (RF), D235, 241–242 (RK), A258, and K262 contribute to the ATP site. Residue D235 participates in L-methionine binding. K266 contacts L-methionine.

This sequence belongs to the AdoMet synthase family. In terms of assembly, homotetramer; dimer of dimers. Mg(2+) is required as a cofactor. Requires K(+) as cofactor.

The protein localises to the cytoplasm. It catalyses the reaction L-methionine + ATP + H2O = S-adenosyl-L-methionine + phosphate + diphosphate. It participates in amino-acid biosynthesis; S-adenosyl-L-methionine biosynthesis; S-adenosyl-L-methionine from L-methionine: step 1/1. Catalyzes the formation of S-adenosylmethionine (AdoMet) from methionine and ATP. The overall synthetic reaction is composed of two sequential steps, AdoMet formation and the subsequent tripolyphosphate hydrolysis which occurs prior to release of AdoMet from the enzyme. The chain is S-adenosylmethionine synthase from Anaeromyxobacter sp. (strain Fw109-5).